The primary structure comprises 1113 residues: Carbamoyl phosphate synthase large chain (1113 aa).

The interval M1 to E407 is carboxyphosphate synthetic domain. R134, R174, G180, G181, E213, I215, E220, G246, V247, H248, Q290, and E304 together coordinate ATP. One can recognise an ATP-grasp 1 domain in the interval K138–I333. Q290, E304, and N306 together coordinate Mg(2+). The Mn(2+) site is built by Q290, E304, and N306. The tract at residues T408–V565 is oligomerization domain. The carbamoyl phosphate synthetic domain stretch occupies residues A566–F967. The region spanning G695–V886 is the ATP-grasp 2 domain. 10 residues coordinate ATP: R731, R770, L772, E777, G802, I803, H804, S805, Q845, and E857. Mg(2+)-binding residues include Q845, E857, and N859. Q845, E857, and N859 together coordinate Mn(2+). Residues G968–A1113 enclose the MGS-like domain. The allosteric domain stretch occupies residues G968–A1113.

This sequence belongs to the CarB family. As to quaternary structure, composed of two chains; the small (or glutamine) chain promotes the hydrolysis of glutamine to ammonia, which is used by the large (or ammonia) chain to synthesize carbamoyl phosphate. Tetramer of heterodimers (alpha,beta)4. The cofactor is Mg(2+). It depends on Mn(2+) as a cofactor.

It catalyses the reaction hydrogencarbonate + L-glutamine + 2 ATP + H2O = carbamoyl phosphate + L-glutamate + 2 ADP + phosphate + 2 H(+). The catalysed reaction is hydrogencarbonate + NH4(+) + 2 ATP = carbamoyl phosphate + 2 ADP + phosphate + 2 H(+). Its pathway is amino-acid biosynthesis; L-arginine biosynthesis; carbamoyl phosphate from bicarbonate: step 1/1. It functions in the pathway pyrimidine metabolism; UMP biosynthesis via de novo pathway; (S)-dihydroorotate from bicarbonate: step 1/3. Large subunit of the glutamine-dependent carbamoyl phosphate synthetase (CPSase). CPSase catalyzes the formation of carbamoyl phosphate from the ammonia moiety of glutamine, carbonate, and phosphate donated by ATP, constituting the first step of 2 biosynthetic pathways, one leading to arginine and/or urea and the other to pyrimidine nucleotides. The large subunit (synthetase) binds the substrates ammonia (free or transferred from glutamine from the small subunit), hydrogencarbonate and ATP and carries out an ATP-coupled ligase reaction, activating hydrogencarbonate by forming carboxy phosphate which reacts with ammonia to form carbamoyl phosphate. This chain is Carbamoyl phosphate synthase large chain, found in Corynebacterium glutamicum (strain ATCC 13032 / DSM 20300 / JCM 1318 / BCRC 11384 / CCUG 27702 / LMG 3730 / NBRC 12168 / NCIMB 10025 / NRRL B-2784 / 534).